The chain runs to 371 residues: Outer membrane protein P2 (371 aa).

Residues Met1–Ala20 form the signal peptide.

Belongs to the Gram-negative porin family. Homotrimer.

The protein resides in the cell outer membrane. Functionally, forms pores that allow passive diffusion of small molecules across the outer membrane. The protein is Outer membrane protein P2 (ompP2) of Haemophilus influenzae.